The following is a 312-amino-acid chain: Ribonuclease Z (312 aa).

Positions 62, 64, 66, 67, 144, 215, and 273 each coordinate Zn(2+). Asp-66 (proton acceptor) is an active-site residue.

It belongs to the RNase Z family. Homodimer. Zn(2+) serves as cofactor.

It carries out the reaction Endonucleolytic cleavage of RNA, removing extra 3' nucleotides from tRNA precursor, generating 3' termini of tRNAs. A 3'-hydroxy group is left at the tRNA terminus and a 5'-phosphoryl group is left at the trailer molecule.. Zinc phosphodiesterase, which displays some tRNA 3'-processing endonuclease activity. Probably involved in tRNA maturation, by removing a 3'-trailer from precursor tRNA. This chain is Ribonuclease Z, found in Prochlorococcus marinus (strain MIT 9515).